The chain runs to 180 residues: UDP-4-amino-4,6-dideoxy-N-acetyl-beta-L-altrosamine N-acetyltransferase (180 aa).

The 157-residue stretch at 13 to 169 folds into the N-acetyltransferase domain; the sequence is IDFTNLNDGE…IDVLLYYKDK (157 aa).

It catalyses the reaction UDP-4-amino-4,6-dideoxy-N-acetyl-beta-L-altrosamine + acetyl-CoA = UDP-2,4-diacetamido-2,4,6-trideoxy-beta-L-altrose + CoA + H(+). Catalyzes the third step in the biosynthesis of pseudaminic acid, a sialic-acid-like sugar that is used to modify flagellin. Mediates N-4 acetylation of UDP-4-amino-4,6-dideoxy-beta-L-AltNAc to form UDP-2,4-diacetamido-2,4,6-trideoxy-beta-L-altropyranose. The chain is UDP-4-amino-4,6-dideoxy-N-acetyl-beta-L-altrosamine N-acetyltransferase (pseH) from Helicobacter pylori (strain ATCC 700392 / 26695) (Campylobacter pylori).